The chain runs to 193 residues: Penicillin-binding protein activator LpoB (193 aa).

The first 16 residues, 1–16, serve as a signal peptide directing secretion; it reads MKKMLFVVAAVFLLAG. A lipid anchor (N-palmitoyl cysteine) is attached at Cys-17. Cys-17 carries S-diacylglycerol cysteine lipidation. The interval 23–50 is disordered; that stretch reads QQPPAPVEPVTPTEPTEPPKPIEPPIEV. Residues 37 to 46 show a composition bias toward pro residues; sequence PTEPPKPIEP.

It belongs to the LpoB family. In terms of assembly, interacts with PBP1b.

It is found in the cell outer membrane. Its function is as follows. Regulator of peptidoglycan synthesis that is essential for the function of penicillin-binding protein 1B (PBP1b). In Proteus mirabilis (strain HI4320), this protein is Penicillin-binding protein activator LpoB.